A 500-amino-acid chain; its full sequence is L-arabinose isomerase (500 aa).

Glu-306, Glu-333, His-350, and His-450 together coordinate Mn(2+).

Belongs to the arabinose isomerase family. Homohexamer. Mn(2+) serves as cofactor.

It carries out the reaction beta-L-arabinopyranose = L-ribulose. It functions in the pathway carbohydrate degradation; L-arabinose degradation via L-ribulose; D-xylulose 5-phosphate from L-arabinose (bacterial route): step 1/3. Its function is as follows. Catalyzes the conversion of L-arabinose to L-ribulose. In Salmonella enteritidis PT4 (strain P125109), this protein is L-arabinose isomerase.